The chain runs to 257 residues: 5'-nucleotidase SurE (257 aa).

A divalent metal cation contacts are provided by aspartate 9, aspartate 10, serine 40, and asparagine 93.

This sequence belongs to the SurE nucleotidase family. A divalent metal cation is required as a cofactor.

It is found in the cytoplasm. It catalyses the reaction a ribonucleoside 5'-phosphate + H2O = a ribonucleoside + phosphate. Its function is as follows. Nucleotidase that shows phosphatase activity on nucleoside 5'-monophosphates. The protein is 5'-nucleotidase SurE of Campylobacter hominis (strain ATCC BAA-381 / DSM 21671 / CCUG 45161 / LMG 19568 / NCTC 13146 / CH001A).